The primary structure comprises 76 residues: MIGDLLLFGTLLVNAGAVLNFKLKKKESQGFGDDLMTEATTGDNIREFLLSLRYFRIFIALWNIFMMFCMIVLFGS.

The N-terminal stretch at 1–17 (MIGDLLLFGTLLVNAGA) is a signal peptide. The Extracellular portion of the chain corresponds to 18 to 54 (VLNFKLKKKESQGFGDDLMTEATTGDNIREFLLSLRY). A helical transmembrane segment spans residues 55 to 75 (FRIFIALWNIFMMFCMIVLFG). A topological domain (cytoplasmic) is located at residue S76.

Belongs to the SMIM7 family.

The protein resides in the membrane. In Xenopus tropicalis (Western clawed frog), this protein is Small integral membrane protein 7 (smim7).